Consider the following 449-residue polypeptide: Glucose-6-phosphate isomerase (449 aa).

Catalysis depends on Glu-291, which acts as the Proton donor. Residues His-312 and Lys-426 contribute to the active site.

Belongs to the GPI family.

It is found in the cytoplasm. The catalysed reaction is alpha-D-glucose 6-phosphate = beta-D-fructose 6-phosphate. It participates in carbohydrate biosynthesis; gluconeogenesis. The protein operates within carbohydrate degradation; glycolysis; D-glyceraldehyde 3-phosphate and glycerone phosphate from D-glucose: step 2/4. Functionally, catalyzes the reversible isomerization of glucose-6-phosphate to fructose-6-phosphate. The chain is Glucose-6-phosphate isomerase from Enterococcus faecalis (strain ATCC 700802 / V583).